A 442-amino-acid chain; its full sequence is Protoheme IX farnesyltransferase (442 aa).

Positions 1-167 are unknown; sequence MGVYSLLVLG…AYVQLMKPRL (167 aa). Helical transmembrane passes span 49-69, 76-96, 106-126, 167-187, 194-214, 245-265, 267-287, 308-328, 365-385, 386-406, and 421-441; these read AAALTGLAVVGAAVLAWRTGA, AVTLALALYPVQVVIGAYTAM, VHLTLGVGIFASLVVALAWTL, LMWLLCLVAGAGMALASSQLG, AATVVLTLGGGVLSIGASGTF, LAFGVVLGVASLAAFAAVNLL, AVLGLTAIAFYSIVYTLVLKP, WVAVTGAVGVGGVVLAGVIFL, HIVYYIGATLASAVVLAELTG, LGPLYAATTVLLGAVFLYFAI, and FHASNAYLGCLLVAVVLDTMV. The prenyltransferase stretch occupies residues 168-439; the sequence is MWLLCLVAGA…CLLVAVVLDT (272 aa).

In the C-terminal section; belongs to the UbiA prenyltransferase family. Protoheme IX farnesyltransferase subfamily.

The protein resides in the cell membrane. The catalysed reaction is heme b + (2E,6E)-farnesyl diphosphate + H2O = Fe(II)-heme o + diphosphate. It participates in porphyrin-containing compound metabolism; heme O biosynthesis; heme O from protoheme: step 1/1. Functionally, converts heme B (protoheme IX) to heme O by substitution of the vinyl group on carbon 2 of heme B porphyrin ring with a hydroxyethyl farnesyl side group. In Halobacterium salinarum (strain ATCC 700922 / JCM 11081 / NRC-1) (Halobacterium halobium), this protein is Protoheme IX farnesyltransferase (ctaB).